The sequence spans 322 residues: Solute carrier family 25 member 16 (322 aa).

Solcar repeat units lie at residues 34–120, 128–219, and 241–322; these read FYWL…YKTF, SGHV…LKSV, and LKTH…AVAF.

It belongs to the mitochondrial carrier (TC 2.A.29) family.

It localises to the mitochondrion inner membrane. May be involved in the transport of coenzyme A in the mitochondrial matrix. Very little is known about the physiological function of this carrier. The protein is Solute carrier family 25 member 16 of Rattus norvegicus (Rat).